Here is a 128-residue protein sequence, read N- to C-terminus: Large ribosomal subunit protein bL12 (128 aa).

The protein belongs to the bacterial ribosomal protein bL12 family. As to quaternary structure, homodimer. Part of the ribosomal stalk of the 50S ribosomal subunit. Forms a multimeric L10(L12)X complex, where L10 forms an elongated spine to which 2 to 4 L12 dimers bind in a sequential fashion. Binds GTP-bound translation factors.

Functionally, forms part of the ribosomal stalk which helps the ribosome interact with GTP-bound translation factors. Is thus essential for accurate translation. This Corynebacterium kroppenstedtii (strain DSM 44385 / JCM 11950 / CIP 105744 / CCUG 35717) protein is Large ribosomal subunit protein bL12.